A 256-amino-acid chain; its full sequence is Ras-related protein Rab-26 (256 aa).

The interval 1–51 is disordered; the sequence is MSRKKTPKSKGASTPAASTLPTANGARPARSGTALSGPDAPPNGPLQPGRP. The span at 12–23 shows a compositional bias: low complexity; the sequence is ASTPAASTLPTA. GTP-binding residues include serine 72, glycine 73, valine 74, glycine 75, lysine 76, threonine 77, cysteine 78, serine 95, and threonine 96. Threonine 77 serves as a coordination point for Mg(2+). 2 consecutive short sequence motifs (switch) follow at residues 86-101 and 119-136; these read GAFL…GIDF and DTAG…YYRD. The Mg(2+) site is built by threonine 96 and aspartate 119. Residues glycine 122, asparagine 177, lysine 178, aspartate 180, alanine 208, and lysine 209 each contribute to the GTP site. 2 S-geranylgeranyl cysteine lipidation sites follow: cysteine 253 and cysteine 254.

Belongs to the small GTPase superfamily. Rab family. Interacts with RIMS1. Interacts with ADRA2B. Requires Mg(2+) as cofactor. In terms of tissue distribution, predominantly expressed in brain.

It localises to the golgi apparatus membrane. The protein localises to the cytoplasmic vesicle. Its subcellular location is the secretory vesicle membrane. The enzyme catalyses GTP + H2O = GDP + phosphate + H(+). With respect to regulation, regulated by guanine nucleotide exchange factors (GEFs) which promote the exchange of bound GDP for free GTP. Regulated by GTPase activating proteins (GAPs) which increase the GTP hydrolysis activity. Inhibited by GDP dissociation inhibitors (GDIs). In terms of biological role, the small GTPases Rab are key regulators of intracellular membrane trafficking, from the formation of transport vesicles to their fusion with membranes. Rabs cycle between an inactive GDP-bound form and an active GTP-bound form that is able to recruit to membranes different set of downstream effectors directly responsible for vesicle formation, movement, tethering and fusion. RAB26 mediates transport of ADRA2A and ADRA2B from the Golgi to the cell membrane. Plays a role in the maturation of zymogenic granules and in pepsinogen secretion in the stomach. Plays a role in the secretion of amylase from acinar granules in the parotid gland. This is Ras-related protein Rab-26 from Homo sapiens (Human).